A 504-amino-acid chain; its full sequence is Prenylcysteine oxidase 1 (504 aa).

A signal peptide spans 1-28; it reads MGRFAATLVGSLFGLGLLLCGLGRLASA. Asn-196, Asn-322, and Asn-352 each carry an N-linked (GlcNAc...) asparagine glycan.

This sequence belongs to the prenylcysteine oxidase family. It depends on FAD as a cofactor. As to expression, expressed mainly in cerebrum.

Its subcellular location is the lysosome. It carries out the reaction an S-polyprenyl-L-cysteine + O2 + H2O = a polyprenal + L-cysteine + H2O2. The catalysed reaction is S-(2E,6E)-farnesyl-L-cysteine + O2 + H2O = (2E,6E)-farnesal + L-cysteine + H2O2. It catalyses the reaction [(2E,6E,10E)-geranylgeranyl]-L-cysteine + O2 + H2O = (2E,6E,10E)-geranylgeranial + L-cysteine + H2O2. Functionally, prenylcysteine oxidase that cleaves the thioether bond of prenyl-L-cysteines, such as farnesylcysteine and geranylgeranylcysteine. Only active against free prenylcysteines and not prenylcysteine residues within prenylated proteins or peptides. Involved in the final step in the degradation of prenylated proteins, by degrading prenylcysteines after the protein has been degraded. This chain is Prenylcysteine oxidase 1, found in Rattus norvegicus (Rat).